Here is a 153-residue protein sequence, read N- to C-terminus: Large ribosomal subunit protein uL22 (153 aa).

The disordered stretch occupies residues 110 to 153 (ITVIVESRPPKQKGASAASARSRRAQGSKAAATKKSAETKEGSE). The segment covering 144–153 (KSAETKEGSE) has biased composition (basic and acidic residues).

The protein belongs to the universal ribosomal protein uL22 family. As to quaternary structure, part of the 50S ribosomal subunit.

Functionally, this protein binds specifically to 23S rRNA; its binding is stimulated by other ribosomal proteins, e.g. L4, L17, and L20. It is important during the early stages of 50S assembly. It makes multiple contacts with different domains of the 23S rRNA in the assembled 50S subunit and ribosome. The globular domain of the protein is located near the polypeptide exit tunnel on the outside of the subunit, while an extended beta-hairpin is found that lines the wall of the exit tunnel in the center of the 70S ribosome. This chain is Large ribosomal subunit protein uL22, found in Mycolicibacterium smegmatis (strain ATCC 700084 / mc(2)155) (Mycobacterium smegmatis).